The chain runs to 240 residues: MKILLIGYGAMNQRVARLAEEKGHEIVGVIEPTPRATTPYQQYQHIADVKDADVAIDFSNPNLLFPLLDEEFHLPLVVATTGEKEKLLNKLDELSQNMPVFFSANMSYGVHALTKILAAAVPLLDDFDIELTEAHHNKKVDAPSGTLEKLYDVIVSLKENVTPVYDRHELNEKRQPQDIGIHSIRGGTIVGEHEVLFAGTDETIQITHRAQSKDIFANGAIQAAERLVNKPNGFYTFDNL.

NAD(+) is bound by residues 79–81 and 103–106; these read ATT and SANM. H135 (proton donor/acceptor) is an active-site residue. Residue H136 participates in (S)-2,3,4,5-tetrahydrodipicolinate binding. K139 functions as the Proton donor in the catalytic mechanism. (S)-2,3,4,5-tetrahydrodipicolinate is bound at residue 145–146; it reads GT.

Belongs to the DapB family.

Its subcellular location is the cytoplasm. The enzyme catalyses (S)-2,3,4,5-tetrahydrodipicolinate + NAD(+) + H2O = (2S,4S)-4-hydroxy-2,3,4,5-tetrahydrodipicolinate + NADH + H(+). It carries out the reaction (S)-2,3,4,5-tetrahydrodipicolinate + NADP(+) + H2O = (2S,4S)-4-hydroxy-2,3,4,5-tetrahydrodipicolinate + NADPH + H(+). The protein operates within amino-acid biosynthesis; L-lysine biosynthesis via DAP pathway; (S)-tetrahydrodipicolinate from L-aspartate: step 4/4. Catalyzes the conversion of 4-hydroxy-tetrahydrodipicolinate (HTPA) to tetrahydrodipicolinate. This chain is 4-hydroxy-tetrahydrodipicolinate reductase, found in Staphylococcus aureus (strain bovine RF122 / ET3-1).